A 481-amino-acid chain; its full sequence is Glutamyl-tRNA(Gln) amidotransferase subunit A (481 aa).

Residues lysine 76 and serine 151 each act as charge relay system in the active site. The Acyl-ester intermediate role is filled by serine 175.

The protein belongs to the amidase family. GatA subfamily. In terms of assembly, heterotrimer of A, B and C subunits.

It catalyses the reaction L-glutamyl-tRNA(Gln) + L-glutamine + ATP + H2O = L-glutaminyl-tRNA(Gln) + L-glutamate + ADP + phosphate + H(+). In terms of biological role, allows the formation of correctly charged Gln-tRNA(Gln) through the transamidation of misacylated Glu-tRNA(Gln) in organisms which lack glutaminyl-tRNA synthetase. The reaction takes place in the presence of glutamine and ATP through an activated gamma-phospho-Glu-tRNA(Gln). The chain is Glutamyl-tRNA(Gln) amidotransferase subunit A from Neisseria meningitidis serogroup B (strain ATCC BAA-335 / MC58).